The sequence spans 131 residues: ATP synthase epsilon chain (131 aa).

It belongs to the ATPase epsilon chain family. In terms of assembly, F-type ATPases have 2 components, CF(1) - the catalytic core - and CF(0) - the membrane proton channel. CF(1) has five subunits: alpha(3), beta(3), gamma(1), delta(1), epsilon(1). CF(0) has three main subunits: a, b and c.

It is found in the cell inner membrane. Its function is as follows. Produces ATP from ADP in the presence of a proton gradient across the membrane. The sequence is that of ATP synthase epsilon chain from Wolinella succinogenes (strain ATCC 29543 / DSM 1740 / CCUG 13145 / JCM 31913 / LMG 7466 / NCTC 11488 / FDC 602W) (Vibrio succinogenes).